The chain runs to 251 residues: Hydroxyacylglutathione hydrolase (251 aa).

Zn(2+) is bound by residues histidine 53, histidine 55, aspartate 57, histidine 58, histidine 110, aspartate 127, and histidine 165.

It belongs to the metallo-beta-lactamase superfamily. Glyoxalase II family. As to quaternary structure, monomer. Zn(2+) is required as a cofactor.

It carries out the reaction an S-(2-hydroxyacyl)glutathione + H2O = a 2-hydroxy carboxylate + glutathione + H(+). It participates in secondary metabolite metabolism; methylglyoxal degradation; (R)-lactate from methylglyoxal: step 2/2. Thiolesterase that catalyzes the hydrolysis of S-D-lactoyl-glutathione to form glutathione and D-lactic acid. This Yersinia pestis (strain Pestoides F) protein is Hydroxyacylglutathione hydrolase.